A 212-amino-acid polypeptide reads, in one-letter code: Thymidylate kinase (212 aa).

11–18 (GPEGAGKT) is an ATP binding site.

It belongs to the thymidylate kinase family.

The enzyme catalyses dTMP + ATP = dTDP + ADP. Functionally, phosphorylation of dTMP to form dTDP in both de novo and salvage pathways of dTTP synthesis. The protein is Thymidylate kinase of Streptococcus pneumoniae (strain CGSP14).